A 268-amino-acid chain; its full sequence is MKIVGLPTLSDNYTWVIQSENADDKRAWIVDPGESQKVIHYFEENQLQLDGILLTHHHYDHTDGIMGVMDALGEVAIVSNAQGPFKPVTHPVKEGDQVQVLNETFQVIETPGHTDEHICFYHPEALFSGDTLFTGGCGKIWQNPPEQMAESLLKLRALNDDCMVYCGHEYTYANLNFAKIAEPNTPAILDRLAEVKTNTQRNIPCVPARLGLEKQTNPFLRFDHPPLMQTLMERQAQPNESVSTLFATLRAWKDELDQTNILEAGLND.

7 residues coordinate Zn(2+): His56, His58, Asp60, His61, His113, Asp130, and His168.

Belongs to the metallo-beta-lactamase superfamily. Glyoxalase II family. As to quaternary structure, monomer. Zn(2+) serves as cofactor.

It catalyses the reaction an S-(2-hydroxyacyl)glutathione + H2O = a 2-hydroxy carboxylate + glutathione + H(+). Its pathway is secondary metabolite metabolism; methylglyoxal degradation; (R)-lactate from methylglyoxal: step 2/2. Functionally, thiolesterase that catalyzes the hydrolysis of S-D-lactoyl-glutathione to form glutathione and D-lactic acid. The chain is Hydroxyacylglutathione hydrolase from Hydrogenovibrio crunogenus (strain DSM 25203 / XCL-2) (Thiomicrospira crunogena).